Consider the following 427-residue polypeptide: Serine--tRNA ligase (427 aa).

An L-serine-binding site is contributed by 231-233 (TAE). 262–264 (RSE) is an ATP binding site. An L-serine-binding site is contributed by E285. 349 to 352 (EISS) contributes to the ATP binding site. Position 385 (S385) interacts with L-serine.

It belongs to the class-II aminoacyl-tRNA synthetase family. Type-1 seryl-tRNA synthetase subfamily. As to quaternary structure, homodimer. The tRNA molecule binds across the dimer.

The protein localises to the cytoplasm. It catalyses the reaction tRNA(Ser) + L-serine + ATP = L-seryl-tRNA(Ser) + AMP + diphosphate + H(+). The catalysed reaction is tRNA(Sec) + L-serine + ATP = L-seryl-tRNA(Sec) + AMP + diphosphate + H(+). It functions in the pathway aminoacyl-tRNA biosynthesis; selenocysteinyl-tRNA(Sec) biosynthesis; L-seryl-tRNA(Sec) from L-serine and tRNA(Sec): step 1/1. Its function is as follows. Catalyzes the attachment of serine to tRNA(Ser). Is also able to aminoacylate tRNA(Sec) with serine, to form the misacylated tRNA L-seryl-tRNA(Sec), which will be further converted into selenocysteinyl-tRNA(Sec). This Brucella canis (strain ATCC 23365 / NCTC 10854 / RM-666) protein is Serine--tRNA ligase.